The sequence spans 251 residues: Large ribosomal subunit protein uL3 (251 aa).

Gln151 bears the N5-methylglutamine mark. The tract at residues 214–251 (KDAPFPAGLKSAANSNSAPTETPAEEVAAPEATEGQEG) is disordered. The span at 231-251 (APTETPAEEVAAPEATEGQEG) shows a compositional bias: low complexity.

The protein belongs to the universal ribosomal protein uL3 family. Part of the 50S ribosomal subunit. Forms a cluster with proteins L14 and L19. Methylated by PrmB.

In terms of biological role, one of the primary rRNA binding proteins, it binds directly near the 3'-end of the 23S rRNA, where it nucleates assembly of the 50S subunit. This chain is Large ribosomal subunit protein uL3, found in Rhizorhabdus wittichii (strain DSM 6014 / CCUG 31198 / JCM 15750 / NBRC 105917 / EY 4224 / RW1) (Sphingomonas wittichii).